A 388-amino-acid polypeptide reads, in one-letter code: Sulfate adenylyltransferase (388 aa).

It belongs to the sulfate adenylyltransferase family.

It carries out the reaction sulfate + ATP + H(+) = adenosine 5'-phosphosulfate + diphosphate. Its pathway is sulfur metabolism; hydrogen sulfide biosynthesis; sulfite from sulfate: step 1/3. The polypeptide is Sulfate adenylyltransferase (Acaryochloris marina (strain MBIC 11017)).